The following is a 153-amino-acid chain: Large ribosomal subunit protein bL9 (153 aa).

This sequence belongs to the bacterial ribosomal protein bL9 family.

Functionally, binds to the 23S rRNA. This Synechococcus sp. (strain JA-3-3Ab) (Cyanobacteria bacterium Yellowstone A-Prime) protein is Large ribosomal subunit protein bL9.